A 547-amino-acid polypeptide reads, in one-letter code: Apolipoprotein N-acyltransferase (547 aa).

5 helical membrane passes run 31–51, 71–91, 106–126, 180–200, and 210–230; these read ILSG…ALIF, FWAG…WIAY, LALL…VAAG, LVGF…MGYV, and ALSH…WGFW. A CN hydrolase domain is found at 247–515; it reads VQANIGNLEK…KYLKNAPLTF (269 aa). Glutamate 294 (proton acceptor) is an active-site residue. Residue lysine 364 is part of the active site. Catalysis depends on cysteine 418, which acts as the Nucleophile. A helical transmembrane segment spans residues 515–535; the sequence is FFVQWGHWDWIVILLVLGAVI.

The protein belongs to the CN hydrolase family. Apolipoprotein N-acyltransferase subfamily.

The protein localises to the cell inner membrane. It carries out the reaction N-terminal S-1,2-diacyl-sn-glyceryl-L-cysteinyl-[lipoprotein] + a glycerophospholipid = N-acyl-S-1,2-diacyl-sn-glyceryl-L-cysteinyl-[lipoprotein] + a 2-acyl-sn-glycero-3-phospholipid + H(+). It functions in the pathway protein modification; lipoprotein biosynthesis (N-acyl transfer). Its function is as follows. Catalyzes the phospholipid dependent N-acylation of the N-terminal cysteine of apolipoprotein, the last step in lipoprotein maturation. The chain is Apolipoprotein N-acyltransferase from Bdellovibrio bacteriovorus (strain ATCC 15356 / DSM 50701 / NCIMB 9529 / HD100).